A 512-amino-acid polypeptide reads, in one-letter code: Histidine ammonia-lyase (512 aa).

A cross-link (5-imidazolinone (Ala-Gly)) is located at residues 142–144 (ASG). S143 is modified (2,3-didehydroalanine (Ser)).

The protein belongs to the PAL/histidase family. In terms of processing, contains an active site 4-methylidene-imidazol-5-one (MIO), which is formed autocatalytically by cyclization and dehydration of residues Ala-Ser-Gly.

Its subcellular location is the cytoplasm. It catalyses the reaction L-histidine = trans-urocanate + NH4(+). It participates in amino-acid degradation; L-histidine degradation into L-glutamate; N-formimidoyl-L-glutamate from L-histidine: step 1/3. The polypeptide is Histidine ammonia-lyase (Bartonella tribocorum (strain CIP 105476 / IBS 506)).